Consider the following 463-residue polypeptide: MCSIPPLRLLEVVDDLTCLVNSSQYSRWNFFTFTLPGFTLPMRKEFTSSCKGSFSNHPVPDHPCKLVVFFRPKMVVTAGADAYLKILEYGVKKTQLRIDRLLLQAFMAGIFVAMAGHCCTVLAGSYPTDPGDPLAVAKPTQKFIYGALFPVAFICIILTGAELFTGNTMTMLICYFQKRVTMLQLGVNWLGSLAGNWLGALFGAYFLSYLTGALGDEHVRQFLFRTCVNKISYGWGECFLRGVGCNTFVCLAVWAVIASENVAGKVLVMWFPIVAFCVGGYEHIIANMYTLQAGLMAGAPVAILDVIAFNFLPTLLGNIVGGCLLVGAVYAYNFYPTLSYTETTGAKVYVQEVGPVLDRRSSMQVSMTEREPDGQVVTEYEAVPFESFGGEYIVNKHATMAAPIPSRASSFLYPFQWQRQRSQSGNLSTHARLDLPNRPVEPPSDGLEVTPQSQTAESVAQQV.

At 1-100 (MCSIPPLRLL…VKKTQLRIDR (100 aa)) the chain is on the cytoplasmic side. The chain crosses the membrane as a helical span at residues 101–121 (LLLQAFMAGIFVAMAGHCCTV). Topologically, residues 122 to 142 (LAGSYPTDPGDPLAVAKPTQK) are extracellular. The chain crosses the membrane as a helical span at residues 143–163 (FIYGALFPVAFICIILTGAEL). Residues 164 to 189 (FTGNTMTMLICYFQKRVTMLQLGVNW) lie on the Cytoplasmic side of the membrane. A helical membrane pass occupies residues 190 to 210 (LGSLAGNWLGALFGAYFLSYL). At 211–237 (TGALGDEHVRQFLFRTCVNKISYGWGE) the chain is on the extracellular side. The chain crosses the membrane as a helical span at residues 238-258 (CFLRGVGCNTFVCLAVWAVIA). Residues 259–265 (SENVAGK) are Cytoplasmic-facing. The chain crosses the membrane as a helical span at residues 266–286 (VLVMWFPIVAFCVGGYEHIIA). Topologically, residues 287–305 (NMYTLQAGLMAGAPVAILD) are extracellular. The chain crosses the membrane as a helical span at residues 306–326 (VIAFNFLPTLLGNIVGGCLLV). Topologically, residues 327–463 (GAVYAYNFYP…QTAESVAQQV (137 aa)) are cytoplasmic. Positions 424 to 463 (SGNLSTHARLDLPNRPVEPPSDGLEVTPQSQTAESVAQQV) are disordered. Residues 450–463 (TPQSQTAESVAQQV) are compositionally biased toward polar residues.

Belongs to the FNT transporter (TC 1.A.16) family. In terms of assembly, homopentamer.

It localises to the cell membrane. It carries out the reaction (S)-lactate(in) + H(+)(in) = (S)-lactate(out) + H(+)(out). It catalyses the reaction formate(in) + H(+)(in) = formate(out) + H(+)(out). The catalysed reaction is pyruvate(out) + H(+)(out) = pyruvate(in) + H(+)(in). The enzyme catalyses acetate(out) + H(+)(out) = acetate(in) + H(+)(in). Inhibited by p-chloromercuribenzene sulfonate (pCMBS). Methyl methanethiosulfonate (MMTS) inhibits L-lactate but not formate transport. Inhibited by the Malaria Box compound MMV007839. Inhibited by BH-296, BH-317, BH-326 and BH-388 compounds. Monocarboxylate-proton symporter; active in acidic-to-neutral pH range. Transports L-lactate and formate. The polypeptide is Formate-nitrite transporter 2 (Toxoplasma gondii (strain ATCC 50611 / Me49)).